The sequence spans 156 residues: Ribosomal RNA large subunit methyltransferase H (156 aa).

S-adenosyl-L-methionine is bound by residues Leu73, Gly104, and 123-128 (LSALTL).

This sequence belongs to the RNA methyltransferase RlmH family. In terms of assembly, homodimer.

The protein localises to the cytoplasm. The enzyme catalyses pseudouridine(1915) in 23S rRNA + S-adenosyl-L-methionine = N(3)-methylpseudouridine(1915) in 23S rRNA + S-adenosyl-L-homocysteine + H(+). Its function is as follows. Specifically methylates the pseudouridine at position 1915 (m3Psi1915) in 23S rRNA. This chain is Ribosomal RNA large subunit methyltransferase H, found in Shewanella piezotolerans (strain WP3 / JCM 13877).